Reading from the N-terminus, the 134-residue chain is Large ribosomal subunit protein eL32 (134 aa).

It belongs to the eukaryotic ribosomal protein eL32 family.

This Spodoptera frugiperda (Fall armyworm) protein is Large ribosomal subunit protein eL32 (RpL32).